Reading from the N-terminus, the 323-residue chain is Phospho-N-acetylmuramoyl-pentapeptide-transferase (323 aa).

The next 9 helical transmembrane spans lie at 12 to 32, 58 to 78, 84 to 104, 120 to 140, 151 to 171, 177 to 197, 200 to 220, 229 to 250, and 303 to 323; these read IVMAIVISFIVASILGPIIIP, PTIGGLIFIFATIITMFIMVG, AMIALYSFVGFGFVGFLDDLL, MILLLIVSGFLTWYAYKYIGT, INFGLFYIPFVMFYFAGVTNA, GLDGLATSVTVLVTTFLGIIS, LGHISLAIFCVALAGALLAFL, VFMGDTGSLALGGAVAMVALIL, and KIVSVFSIITVVFCFIAFASL.

It belongs to the glycosyltransferase 4 family. MraY subfamily. Requires Mg(2+) as cofactor.

It is found in the cell membrane. It carries out the reaction UDP-N-acetyl-alpha-D-muramoyl-L-alanyl-gamma-D-glutamyl-meso-2,6-diaminopimeloyl-D-alanyl-D-alanine + di-trans,octa-cis-undecaprenyl phosphate = di-trans,octa-cis-undecaprenyl diphospho-N-acetyl-alpha-D-muramoyl-L-alanyl-D-glutamyl-meso-2,6-diaminopimeloyl-D-alanyl-D-alanine + UMP. Its pathway is cell wall biogenesis; peptidoglycan biosynthesis. Its function is as follows. Catalyzes the initial step of the lipid cycle reactions in the biosynthesis of the cell wall peptidoglycan: transfers peptidoglycan precursor phospho-MurNAc-pentapeptide from UDP-MurNAc-pentapeptide onto the lipid carrier undecaprenyl phosphate, yielding undecaprenyl-pyrophosphoryl-MurNAc-pentapeptide, known as lipid I. In Clostridium perfringens (strain ATCC 13124 / DSM 756 / JCM 1290 / NCIMB 6125 / NCTC 8237 / Type A), this protein is Phospho-N-acetylmuramoyl-pentapeptide-transferase.